The primary structure comprises 181 residues: Protein Syd (181 aa).

The protein belongs to the Syd family.

It is found in the cell inner membrane. In terms of biological role, interacts with the SecY protein in vivo. May bind preferentially to an uncomplexed state of SecY, thus functioning either as a chelating agent for excess SecY in the cell or as a regulatory factor that negatively controls the translocase function. This chain is Protein Syd, found in Citrobacter koseri (strain ATCC BAA-895 / CDC 4225-83 / SGSC4696).